Consider the following 436-residue polypeptide: Chromosomal replication initiator protein DnaA (436 aa).

The domain I, interacts with DnaA modulators stretch occupies residues 1–69; that stretch reads MLADEILELL…AYLYEVKTGK (69 aa). The domain II stretch occupies residues 69 to 99; sequence KKPEVEITSQTKLKNIKQNQVNVKQIKAQSS. The segment at 100–314 is domain III, AAA+ region; that stretch reads ILNPGYTFEN…GAIINLNAYA (215 aa). Residues Gly144, Gly146, Lys147, and Thr148 each coordinate ATP. Residues 315-436 form a domain IV, binds dsDNA region; the sequence is SLMRVEITLE…EIKNKILTKG (122 aa).

This sequence belongs to the DnaA family. Oligomerizes as a right-handed, spiral filament on DNA at oriC.

The protein localises to the cytoplasm. Its function is as follows. Plays an essential role in the initiation and regulation of chromosomal replication. ATP-DnaA binds to the origin of replication (oriC) to initiate formation of the DNA replication initiation complex once per cell cycle. Binds the DnaA box (a 9 base pair repeat at the origin) and separates the double-stranded (ds)DNA. Forms a right-handed helical filament on oriC DNA; dsDNA binds to the exterior of the filament while single-stranded (ss)DNA is stabiized in the filament's interior. The ATP-DnaA-oriC complex binds and stabilizes one strand of the AT-rich DNA unwinding element (DUE), permitting loading of DNA polymerase. After initiation quickly degrades to an ADP-DnaA complex that is not apt for DNA replication. Binds acidic phospholipids. The sequence is that of Chromosomal replication initiator protein DnaA from Campylobacter concisus (strain 13826).